We begin with the raw amino-acid sequence, 496 residues long: Signal recognition particle subunit SRP54 1 (496 aa).

A G-domain region spans residues 1-296 (MVLAQLGGSI…DVKPFVSRLL (296 aa)). GTP contacts are provided by residues 108-115 (GLQGSGKT), 191-195 (DTSGR), and 249-252 (TKMD). Positions 297–496 (GMGDLSGLVN…MGMFGGGGGE (200 aa)) are M-domain.

Belongs to the GTP-binding SRP family. SRP54 subfamily. Component of a signal recognition particle (SRP) complex that consists of a 7SL RNA molecule of 300 nucleotides and six protein subunits: SRP72, SRP68, SRP54, SRP19, SRP14 and SRP9.

The protein resides in the cytoplasm. It localises to the endoplasmic reticulum. The catalysed reaction is GTP + H2O = GDP + phosphate + H(+). Its function is as follows. Component of the signal recognition particle (SRP) complex, a ribonucleoprotein complex that mediates the cotranslational targeting of secretory and membrane proteins to the endoplasmic reticulum (ER). As part of the SRP complex, associates with the SRP receptor (SR) component SRPRA to target secretory proteins to the endoplasmic reticulum membrane. Binds to the signal sequence of presecretory proteins when they emerge from the ribosomes. Displays basal GTPase activity, and stimulates reciprocal GTPase activation of the SR subunit SRPRA. Forms a guanosine 5'-triphosphate (GTP)-dependent complex with the SR subunit SRPRA. SR compaction and GTPase mediated rearrangement of SR drive SRP-mediated cotranslational protein translocation into the ER. Requires the presence of SRP9/SRP14 and/or SRP19 to stably interact with RNA. This is Signal recognition particle subunit SRP54 1 from Solanum lycopersicum (Tomato).